A 122-amino-acid chain; its full sequence is NADH-quinone oxidoreductase subunit A (122 aa).

The next 3 helical transmembrane spans lie at 10–30, 66–86, and 91–111; these read MIVG…LTLG, IFAL…PWAV, and LGLF…IGLA.

Belongs to the complex I subunit 3 family. In terms of assembly, NDH-1 is composed of 14 different subunits. Subunits NuoA, H, J, K, L, M, N constitute the membrane sector of the complex.

The protein resides in the cell membrane. It catalyses the reaction a quinone + NADH + 5 H(+)(in) = a quinol + NAD(+) + 4 H(+)(out). Functionally, NDH-1 shuttles electrons from NADH, via FMN and iron-sulfur (Fe-S) centers, to quinones in the respiratory chain. The immediate electron acceptor for the enzyme in this species is believed to be a menaquinone. Couples the redox reaction to proton translocation (for every two electrons transferred, four hydrogen ions are translocated across the cytoplasmic membrane), and thus conserves the redox energy in a proton gradient. This chain is NADH-quinone oxidoreductase subunit A, found in Bacillus cytotoxicus (strain DSM 22905 / CIP 110041 / 391-98 / NVH 391-98).